We begin with the raw amino-acid sequence, 163 residues long: MNRRTRPRTASRVAAVQALFQGEQAQESLEAVIEQFVRFRLGALPGQDGFEDGRIPDAEVPLFSRIVRAATKEQDVIDPLLITALPAEWPLARLDPVLRALLRAGACELRMKDGPPPRVVINEYLDIAHGFFQGEEPRMVNGILNALARQLRPEEFAGERQQG.

Belongs to the NusB family.

Functionally, involved in transcription antitermination. Required for transcription of ribosomal RNA (rRNA) genes. Binds specifically to the boxA antiterminator sequence of the ribosomal RNA (rrn) operons. This chain is Transcription antitermination protein NusB, found in Granulibacter bethesdensis (strain ATCC BAA-1260 / CGDNIH1).